The chain runs to 63 residues: Large ribosomal subunit protein bL28A (63 aa).

The protein belongs to the bacterial ribosomal protein bL28 family.

This is Large ribosomal subunit protein bL28A from Nocardia farcinica (strain IFM 10152).